Here is a 146-residue protein sequence, read N- to C-terminus: Putative pre-16S rRNA nuclease (146 aa).

The protein belongs to the YqgF nuclease family.

The protein resides in the cytoplasm. Could be a nuclease involved in processing of the 5'-end of pre-16S rRNA. This is Putative pre-16S rRNA nuclease from Mycoplasmopsis pulmonis (strain UAB CTIP) (Mycoplasma pulmonis).